A 77-amino-acid polypeptide reads, in one-letter code: Small ribosomal subunit protein bS18 (77 aa).

It belongs to the bacterial ribosomal protein bS18 family. In terms of assembly, part of the 30S ribosomal subunit. Forms a tight heterodimer with protein bS6.

Its function is as follows. Binds as a heterodimer with protein bS6 to the central domain of the 16S rRNA, where it helps stabilize the platform of the 30S subunit. This is Small ribosomal subunit protein bS18 from Lactobacillus gasseri (strain ATCC 33323 / DSM 20243 / BCRC 14619 / CIP 102991 / JCM 1131 / KCTC 3163 / NCIMB 11718 / NCTC 13722 / AM63).